Here is a 940-residue protein sequence, read N- to C-terminus: Isoleucine--tRNA ligase (940 aa).

Residues 58 to 68 (PYANGSIHIGH) carry the 'HIGH' region motif. Glu-564 lines the L-isoleucyl-5'-AMP pocket. The short motif at 605–609 (KMSKS) is the 'KMSKS' region element. Lys-608 contributes to the ATP binding site. Residues Cys-903, Cys-906, Cys-923, and Cys-926 each coordinate Zn(2+).

Belongs to the class-I aminoacyl-tRNA synthetase family. IleS type 1 subfamily. Monomer. Zn(2+) is required as a cofactor.

Its subcellular location is the cytoplasm. It carries out the reaction tRNA(Ile) + L-isoleucine + ATP = L-isoleucyl-tRNA(Ile) + AMP + diphosphate. Functionally, catalyzes the attachment of isoleucine to tRNA(Ile). As IleRS can inadvertently accommodate and process structurally similar amino acids such as valine, to avoid such errors it has two additional distinct tRNA(Ile)-dependent editing activities. One activity is designated as 'pretransfer' editing and involves the hydrolysis of activated Val-AMP. The other activity is designated 'posttransfer' editing and involves deacylation of mischarged Val-tRNA(Ile). The chain is Isoleucine--tRNA ligase from Shewanella sediminis (strain HAW-EB3).